Reading from the N-terminus, the 434-residue chain is Gamma-enolase (434 aa).

The substrate site is built by His-158 and Glu-167. Glu-210 functions as the Proton donor in the catalytic mechanism. Mg(2+) is bound by residues Asp-245, Glu-293, and Asp-318. Substrate contacts are provided by Glu-293 and Asp-318. Lys-343 (proton acceptor) is an active-site residue. Residues 370 to 373 and Lys-394 contribute to the substrate site; that span reads SHRS.

Belongs to the enolase family. As to quaternary structure, homodimer. Mg(2+) serves as cofactor. Expressed in the brain and, to much less but significant extents, in the pituitary and adrenal glands.

It localises to the cytoplasm. The catalysed reaction is (2R)-2-phosphoglycerate = phosphoenolpyruvate + H2O. It participates in carbohydrate degradation; glycolysis; pyruvate from D-glyceraldehyde 3-phosphate: step 4/5. The chain is Gamma-enolase (ENO2) from Gallus gallus (Chicken).